The chain runs to 110 residues: UPF0145 protein LMOf2365_0219 (110 aa).

It belongs to the UPF0145 family.

The protein is UPF0145 protein LMOf2365_0219 of Listeria monocytogenes serotype 4b (strain F2365).